Consider the following 272-residue polypeptide: Phosphatidylglycerol--prolipoprotein diacylglyceryl transferase (272 aa).

A run of 7 helical transmembrane segments spans residues 17–37 (LQVH…WGLA), 55–75 (LVFY…VLFY), 90–110 (VWTG…AMLF), 125–145 (FIAP…FIGG), 174–194 (PSQI…LWWF), 202–222 (MAVS…MEFF), and 230–250 (GFIL…MLLI). Arg-138 is a binding site for a 1,2-diacyl-sn-glycero-3-phospho-(1'-sn-glycerol).

The protein belongs to the Lgt family.

It is found in the cell inner membrane. It catalyses the reaction L-cysteinyl-[prolipoprotein] + a 1,2-diacyl-sn-glycero-3-phospho-(1'-sn-glycerol) = an S-1,2-diacyl-sn-glyceryl-L-cysteinyl-[prolipoprotein] + sn-glycerol 1-phosphate + H(+). Its pathway is protein modification; lipoprotein biosynthesis (diacylglyceryl transfer). Catalyzes the transfer of the diacylglyceryl group from phosphatidylglycerol to the sulfhydryl group of the N-terminal cysteine of a prolipoprotein, the first step in the formation of mature lipoproteins. The polypeptide is Phosphatidylglycerol--prolipoprotein diacylglyceryl transferase (Acinetobacter baumannii (strain ACICU)).